The following is a 150-amino-acid chain: Arginine repressor (150 aa).

It belongs to the ArgR family.

It is found in the cytoplasm. It participates in amino-acid biosynthesis; L-arginine biosynthesis [regulation]. In terms of biological role, regulates arginine biosynthesis genes. The polypeptide is Arginine repressor (Clostridium botulinum (strain Eklund 17B / Type B)).